Reading from the N-terminus, the 358-residue chain is Src kinase-associated phosphoprotein 2 (358 aa).

2 positions are modified to phosphoserine: Ser-5 and Ser-9. Residues Pro-14 to Gln-64 are homodimerization. Tyr-75 is modified (phosphotyrosine). Ser-87 and Ser-90 each carry phosphoserine. Residues Phe-116–Gln-219 enclose the PH domain. A phosphotyrosine mark is found at Tyr-151 and Tyr-197. Ser-223 is modified (phosphoserine). The disordered stretch occupies residues Glu-232–Asp-292. Positions Ile-255–Thr-270 are enriched in acidic residues. Tyr-260 is modified (phosphotyrosine; by FYN). Phosphoserine occurs at positions 272, 282, and 285. Residues Lys-274–Asp-292 show a composition bias toward basic and acidic residues. The SH3 domain occupies Asp-296–Asp-357.

It belongs to the SKAP family. Interacts with LAT, GRB2, PTK2B and PRAM1. Homodimer. Interacts with FYB1, which is required for SKAP2 protein stability. Interacts with PTPNS1. Part of a complex consisting of SKAP2, FYB1 and PTPNS1. Part of a complex consisting of SKAP2, FYB1 and PIRB. May interact with actin. May interact with FYN, HCK and LYN. Interacts with FASLG. In terms of processing, dephosphorylated on Tyr-75 by PTPN22. Phosphorylated by FYN on Tyr-260. In case of infection with Y.pseudotuberculosis, dephosphorylated by bacterial phosphatase yopH. As to expression, expressed in kidney, lung, liver, spleen, bone marrow and testis. Present in T-cells, B-cells, and all cells of the myelomonocytic lineage. Present in all brain regions, with highest levels in neurons from the Purkinje cell layer, hippocampal gyrus, cortex and substantia nigra (at protein level).

It localises to the cytoplasm. In terms of biological role, may be involved in B-cell and macrophage adhesion processes. In B-cells, may act by coupling the B-cell receptor (BCR) to integrin activation. May play a role in src signaling pathway. The chain is Src kinase-associated phosphoprotein 2 (Skap2) from Mus musculus (Mouse).